A 961-amino-acid chain; its full sequence is Outer capsid protein VP2 (961 aa).

This sequence belongs to the orbivirus VP2 family.

It is found in the virion. The VP2 protein is one of the two proteins (with VP5) which constitute the virus particle outer capsid. It is the major target of the host immunogenic response. Responsible for viral attachment to target host cell, probably by binding to sialic acid. This attachment induces virion internalization predominantly through clathrin-dependent endocytosis. In Antilocapra americana (Pronghorn), this protein is Outer capsid protein VP2 (Segment-2).